We begin with the raw amino-acid sequence, 244 residues long: Haloacid dehalogenase-like hydrolase domain-containing protein 3 (244 aa).

Belongs to the HAD-like hydrolase superfamily.

In Xenopus laevis (African clawed frog), this protein is Haloacid dehalogenase-like hydrolase domain-containing protein 3 (hdhd3).